The sequence spans 428 residues: Homocitrate synthase, cytosolic isozyme (428 aa).

One can recognise a Pyruvate carboxyltransferase domain in the interval 23-276 (FQLIDSTLRE…KSKYKLHKIR (254 aa)). Arg31 lines the 2-oxoglutarate pocket. Glu32 provides a ligand contact to Mg(2+). 2-oxoglutarate contacts are provided by His91, Arg151, and Thr185. His212 and His214 together coordinate Mg(2+). His309 functions as the Proton acceptor in the catalytic mechanism. Residue Ser385 is modified to Phosphoserine. The residue at position 396 (Thr396) is a Phosphothreonine. Positions 399–428 (VLSAKKNKKNDSDVPELATIPAAKRTKPSA) are disordered. Residues Ser401 and Ser410 each carry the phosphoserine modification.

The protein belongs to the alpha-IPM synthase/homocitrate synthase family. Homocitrate synthase LYS20/LYS21 subfamily. The cofactor is Mg(2+). It depends on Mn(2+) as a cofactor.

It is found in the cytoplasm. It catalyses the reaction acetyl-CoA + 2-oxoglutarate + H2O = (2R)-homocitrate + CoA + H(+). It participates in amino-acid biosynthesis; L-lysine biosynthesis via AAA pathway; L-alpha-aminoadipate from 2-oxoglutarate: step 1/5. Functionally, catalyzes the aldol-type condensation of 2-oxoglutarate with acetyl-CoA to yield homocitrate. Carries out the first step of the alpha-aminoadipate (AAA) lysine biosynthesis pathway. The sequence is that of Homocitrate synthase, cytosolic isozyme (LYS20) from Saccharomyces cerevisiae (strain ATCC 204508 / S288c) (Baker's yeast).